Here is a 148-residue protein sequence, read N- to C-terminus: Cystatin-C (148 aa).

An N-terminal signal peptide occupies residues 1-30; the sequence is MVGSPRAPLLLLASLIVALALALAVSPAAA. Gln31 carries the pyrrolidone carboxylic acid modification. Residues 84 to 88 carry the Secondary area of contact motif; sequence QVVSG. 2 disulfide bridges follow: Cys102-Cys112 and Cys126-Cys146.

The protein resides in the secreted. Functionally, this is a thiol proteinase inhibitor. In Bos taurus (Bovine), this protein is Cystatin-C (CST3).